The following is a 92-amino-acid chain: Small ribosomal subunit protein uS19 (92 aa).

The protein belongs to the universal ribosomal protein uS19 family.

Its function is as follows. Protein S19 forms a complex with S13 that binds strongly to the 16S ribosomal RNA. This is Small ribosomal subunit protein uS19 from Francisella philomiragia subsp. philomiragia (strain ATCC 25017 / CCUG 19701 / FSC 153 / O#319-036).